The following is a 126-amino-acid chain: MSDPRYQVDVSVVTHYLADQSQPEHERFAFAYTITVQNNGEQPARLMSRHWVITDGDGHVEEVRGAGVVGQQPLIGAGKSHTYSSGTVMTTKVGTMQGSYEMVADDGKHFDAIIKPFRLAVPGALH.

Residues S2–H126 enclose the ApaG domain.

This Pseudomonas fluorescens (strain Pf0-1) protein is Protein ApaG.